The primary structure comprises 232 residues: 2,3,4,5-tetrahydropyridine-2,6-dicarboxylate N-acetyltransferase (232 aa).

It belongs to the transferase hexapeptide repeat family. DapH subfamily.

The enzyme catalyses (S)-2,3,4,5-tetrahydrodipicolinate + acetyl-CoA + H2O = L-2-acetamido-6-oxoheptanedioate + CoA. It functions in the pathway amino-acid biosynthesis; L-lysine biosynthesis via DAP pathway; LL-2,6-diaminopimelate from (S)-tetrahydrodipicolinate (acetylase route): step 1/3. In terms of biological role, catalyzes the transfer of an acetyl group from acetyl-CoA to tetrahydrodipicolinate. In Streptococcus pneumoniae serotype 4 (strain ATCC BAA-334 / TIGR4), this protein is 2,3,4,5-tetrahydropyridine-2,6-dicarboxylate N-acetyltransferase.